The primary structure comprises 601 residues: Elongation factor 4 (601 aa).

Residues Ser6 to Glu188 enclose the tr-type G domain. GTP is bound by residues Asp18–Thr23 and Asn135–Asp138.

Belongs to the TRAFAC class translation factor GTPase superfamily. Classic translation factor GTPase family. LepA subfamily.

Its subcellular location is the cell inner membrane. It carries out the reaction GTP + H2O = GDP + phosphate + H(+). Required for accurate and efficient protein synthesis under certain stress conditions. May act as a fidelity factor of the translation reaction, by catalyzing a one-codon backward translocation of tRNAs on improperly translocated ribosomes. Back-translocation proceeds from a post-translocation (POST) complex to a pre-translocation (PRE) complex, thus giving elongation factor G a second chance to translocate the tRNAs correctly. Binds to ribosomes in a GTP-dependent manner. This is Elongation factor 4 from Anaeromyxobacter sp. (strain K).